The chain runs to 701 residues: Long chain acyl-CoA synthetase 6, peroxisomal (701 aa).

Residues methionine 1 to threonine 38 constitute a propeptide, removed in mature form. Residues arginine 15 to leucine 23 carry the Microbody targeting signal motif. Isoleucine 266–lysine 277 is an ATP binding site. The interval aspartate 526–lysine 550 is fatty acid-binding.

This sequence belongs to the ATP-dependent AMP-binding enzyme family. Mg(2+) serves as cofactor. As to expression, expressed in roots, stems, leaves flowers and germinating seedling. Preferentially expressed in seeds and senescent leaves.

The protein resides in the peroxisome. It is found in the glyoxysome membrane. The catalysed reaction is a long-chain fatty acid + ATP + CoA = a long-chain fatty acyl-CoA + AMP + diphosphate. It catalyses the reaction tetradecanoate + ATP + CoA = tetradecanoyl-CoA + AMP + diphosphate. The enzyme catalyses hexadecanoate + ATP + CoA = hexadecanoyl-CoA + AMP + diphosphate. It carries out the reaction (9Z)-octadecenoate + ATP + CoA = (9Z)-octadecenoyl-CoA + AMP + diphosphate. The catalysed reaction is (9Z,12Z)-octadecadienoate + ATP + CoA = (9Z,12Z)-octadecadienoyl-CoA + AMP + diphosphate. It catalyses the reaction (9Z,12Z,15Z)-octadecatrienoate + ATP + CoA = (9Z,12Z,15Z)-octadecatrienoyl-CoA + AMP + diphosphate. Its pathway is lipid metabolism; fatty acid metabolism. Functionally, activation of long-chain fatty acids for both synthesis of cellular lipids, and degradation via beta-oxidation. Preferentially uses palmitate, palmitoleate, oleate, linoleate and eicosenoate as substrates. Can use myristate and linolenate as substrates. May play a regulatory role both in fatty acid import into glyoxysomes and in fatty acid beta-oxidation. Functions redundantly with LACS7 in lipid mobilization for beta-oxidation during seed germination, which is essential for postgerminative growth and seedling establishment. The polypeptide is Long chain acyl-CoA synthetase 6, peroxisomal (Arabidopsis thaliana (Mouse-ear cress)).